A 620-amino-acid polypeptide reads, in one-letter code: MDSHTLIQALIYLGSAALIVPIAVRLGLGSVLGYLIAGCIIGPWGLRLVTDAESILHFAEIGVVLMLFIIGLELDPQRLWKLRAAVFGCGALQMVICGGLLGLFCMLLGLRWQVAELIGMTLALSSTAIAMQAMNERNLMVTQMGRSAFAVLLFQDIAAIPLVAMIPLLATSSASTTMGAFALSALKVAGALVLVVLLGRYVTRPALRFVARSGLREVFSAVALFLVFGFGLLLEEVGLSMAMGAFLAGVLLASSEYRHALESDIEPFKGLLLGLFFIGVGMSIDFGTLLENPLRIVILLLGFLIIKIAMLWLIARPLQVPNKQRRWFAVLLGQGSEFAFVVFGAAQMANVLEPEWAKSLTLAVALSMAATPILLVILNRLEQSSTEEAREADEIDEEQPRVIIAGFGRFGQITGRLLLSSGVKMVVLDHDPDHIETLRKFGMKVFYGDATRMDLLESAGAAKAEVLINAIDDPQTNLQLTEMVKEHFPHLQIIARARDVDHYIRLRQAGVEKPERETFEGALKTGRLALESLGLGPYEARERADVFRRFNIQMVEEMAMVENDTKARAAVYKRTSAMLSEIITEDREHLSLIQRHGWQGTEEGKHTGNMADEPETKPSS.

Helical transmembrane passes span 4-24, 26-46, 54-74, 90-110, 114-134, 149-169, 178-198, 218-238, 270-290, 294-314, 327-347, and 359-379; these read HTLIQALIYLGSAALIVPIAV, LGLGSVLGYLIAGCIIGPWGL, SILHFAEIGVVLMLFIIGLEL, GALQMVICGGLLGLFCMLLGL, VAELIGMTLALSSTAIAMQAM, FAVLLFQDIAAIPLVAMIPLL, MGAFALSALKVAGALVLVVLL, VFSAVALFLVFGFGLLLEEVG, GLLLGLFFIGVGMSIDFGTLL, LRIVILLLGFLIIKIAMLWLI, WFAVLLGQGSEFAFVVFGAAQ, and SLTLAVALSMAATPILLVILN. An RCK N-terminal domain is found at 399-518; sequence QPRVIIAGFG…AGVEKPERET (120 aa). The disordered stretch occupies residues 597–620; the sequence is GWQGTEEGKHTGNMADEPETKPSS.

Belongs to the monovalent cation:proton antiporter 2 (CPA2) transporter (TC 2.A.37) family. KefC subfamily. In terms of assembly, homodimer. Interacts with the regulatory subunit KefF.

It localises to the cell inner membrane. In terms of biological role, pore-forming subunit of a potassium efflux system that confers protection against electrophiles. Catalyzes K(+)/H(+) antiport. The chain is Glutathione-regulated potassium-efflux system protein KefC from Escherichia coli (strain K12 / MC4100 / BW2952).